Reading from the N-terminus, the 95-residue chain is Aspartyl/glutamyl-tRNA(Asn/Gln) amidotransferase subunit C (95 aa).

Belongs to the GatC family. In terms of assembly, heterotrimer of A, B and C subunits.

The catalysed reaction is L-glutamyl-tRNA(Gln) + L-glutamine + ATP + H2O = L-glutaminyl-tRNA(Gln) + L-glutamate + ADP + phosphate + H(+). The enzyme catalyses L-aspartyl-tRNA(Asn) + L-glutamine + ATP + H2O = L-asparaginyl-tRNA(Asn) + L-glutamate + ADP + phosphate + 2 H(+). Allows the formation of correctly charged Asn-tRNA(Asn) or Gln-tRNA(Gln) through the transamidation of misacylated Asp-tRNA(Asn) or Glu-tRNA(Gln) in organisms which lack either or both of asparaginyl-tRNA or glutaminyl-tRNA synthetases. The reaction takes place in the presence of glutamine and ATP through an activated phospho-Asp-tRNA(Asn) or phospho-Glu-tRNA(Gln). This Allorhizobium ampelinum (strain ATCC BAA-846 / DSM 112012 / S4) (Agrobacterium vitis (strain S4)) protein is Aspartyl/glutamyl-tRNA(Asn/Gln) amidotransferase subunit C.